The chain runs to 125 residues: Small ribosomal subunit protein uS12m (125 aa).

Positions 1–24 (MPTSNQSIRHGREKKRRTDRTRAL) are disordered. The span at 9–19 (RHGREKKRRTD) shows a compositional bias: basic residues.

This sequence belongs to the universal ribosomal protein uS12 family.

The protein resides in the mitochondrion. In terms of biological role, protein S12 is involved in the translation initiation step. The protein is Small ribosomal subunit protein uS12m (RPS12) of Pinus sylvestris (Scotch pine).